The following is an 80-amino-acid chain: Cell division activator CedA (80 aa).

It belongs to the CedA family.

Activates the cell division inhibited by chromosomal DNA over-replication. The polypeptide is Cell division activator CedA (Salmonella choleraesuis (strain SC-B67)).